The primary structure comprises 65 residues: ATP synthase F(0) complex subunit 8 (65 aa).

A helical membrane pass occupies residues 8-24 (TWLTTILSMFLALFIIF). Lys-53 carries the N6-acetyllysine; alternate modification. An N6-succinyllysine; alternate modification is found at Lys-53. Position 56 is an N6-acetyllysine (Lys-56).

Belongs to the ATPase protein 8 family. Component of the ATP synthase complex composed at least of ATP5F1A/subunit alpha, ATP5F1B/subunit beta, ATP5MC1/subunit c (homooctomer), MT-ATP6/subunit a, MT-ATP8/subunit 8, ATP5ME/subunit e, ATP5MF/subunit f, ATP5MG/subunit g, ATP5MK/subunit k, ATP5MJ/subunit j, ATP5F1C/subunit gamma, ATP5F1D/subunit delta, ATP5F1E/subunit epsilon, ATP5PF/subunit F6, ATP5PB/subunit b, ATP5PD/subunit d, ATP5PO/subunit OSCP. ATP synthase complex consists of a soluble F(1) head domain (subunits alpha(3) and beta(3)) - the catalytic core - and a membrane F(0) domain - the membrane proton channel (subunits c, a, 8, e, f, g, k and j). These two domains are linked by a central stalk (subunits gamma, delta, and epsilon) rotating inside the F1 region and a stationary peripheral stalk (subunits F6, b, d, and OSCP). Interacts with PRICKLE3.

It localises to the mitochondrion membrane. Subunit 8, of the mitochondrial membrane ATP synthase complex (F(1)F(0) ATP synthase or Complex V) that produces ATP from ADP in the presence of a proton gradient across the membrane which is generated by electron transport complexes of the respiratory chain. ATP synthase complex consist of a soluble F(1) head domain - the catalytic core - and a membrane F(1) domain - the membrane proton channel. These two domains are linked by a central stalk rotating inside the F(1) region and a stationary peripheral stalk. During catalysis, ATP synthesis in the catalytic domain of F(1) is coupled via a rotary mechanism of the central stalk subunits to proton translocation. In vivo, can only synthesize ATP although its ATP hydrolase activity can be activated artificially in vitro. Part of the complex F(0) domain. In Capra ibex ibex (Alpine ibex), this protein is ATP synthase F(0) complex subunit 8.